The following is a 335-amino-acid chain: tRNA N6-adenosine threonylcarbamoyltransferase (335 aa).

Positions 110 and 114 each coordinate Fe cation. Residues 132-136, aspartate 165, glycine 178, and asparagine 271 each bind substrate; that span reads LVSGG. Aspartate 299 lines the Fe cation pocket.

The protein belongs to the KAE1 / TsaD family. It depends on Fe(2+) as a cofactor.

Its subcellular location is the cytoplasm. The enzyme catalyses L-threonylcarbamoyladenylate + adenosine(37) in tRNA = N(6)-L-threonylcarbamoyladenosine(37) in tRNA + AMP + H(+). In terms of biological role, required for the formation of a threonylcarbamoyl group on adenosine at position 37 (t(6)A37) in tRNAs that read codons beginning with adenine. Is involved in the transfer of the threonylcarbamoyl moiety of threonylcarbamoyl-AMP (TC-AMP) to the N6 group of A37, together with TsaE and TsaB. TsaD likely plays a direct catalytic role in this reaction. The polypeptide is tRNA N6-adenosine threonylcarbamoyltransferase (Campylobacter jejuni subsp. jejuni serotype O:6 (strain 81116 / NCTC 11828)).